Reading from the N-terminus, the 344-residue chain is Ferredoxin--NADP reductase (344 aa).

The FAD site is built by aspartate 36, glutamine 44, tyrosine 49, valine 89, phenylalanine 127, aspartate 291, and threonine 332.

The protein belongs to the ferredoxin--NADP reductase type 2 family. Homodimer. It depends on FAD as a cofactor.

The enzyme catalyses 2 reduced [2Fe-2S]-[ferredoxin] + NADP(+) + H(+) = 2 oxidized [2Fe-2S]-[ferredoxin] + NADPH. In Beijerinckia indica subsp. indica (strain ATCC 9039 / DSM 1715 / NCIMB 8712), this protein is Ferredoxin--NADP reductase.